The chain runs to 605 residues: uncharacterized protein (605 aa).

2 disordered regions span residues 10 to 78 (RRGG…FPPA) and 216 to 248 (RAPD…VRNP). Low complexity predominate over residues 20–48 (AGGRPAAGGRPAAGGRPAAGSRAAAGAAG). Over residues 220–233 (CPSPRTPMVKPPFR) the composition is skewed to pro residues.

This is an uncharacterized protein from Dryophytes versicolor (chameleon treefrog).